The following is a 400-amino-acid chain: NADPH dehydrogenase 2 (400 aa).

2 residues coordinate FMN: Thr38 and Gln115. Substrate contacts are provided by His192 and Asn195. The active-site Proton donor is the Tyr197. FMN-binding residues include Arg244 and Arg349. Ser353 bears the Phosphoserine mark. Tyr376 is a binding site for substrate. Phosphoserine is present on Ser379.

It belongs to the NADH:flavin oxidoreductase/NADH oxidase family. In terms of assembly, homodimer or heterodimer with OYE3. FMN serves as cofactor.

It is found in the cytoplasm. The protein localises to the nucleus. It localises to the mitochondrion. The enzyme catalyses A + NADPH + H(+) = AH2 + NADP(+). Functionally, flavin-dependent enoate reductase that catalyzes the chemo- and stereoslective hydrogenation of electron-poor alkenes. The enzyme is reduced by NADPH, and oxygen, quinones, and alpha,beta-unsaturated aldehydes and ketones can act as electron acceptors to complete catalytic turnover. The physiological oxidant remains elusive. Has an antioxidant activity, reducing reactive oxygen species (ROS) levels when overexpressed. Formation of OYE2-OYE3 heterodimers contribute to the induction of programmed cell death upon oxidative stress. The protein is NADPH dehydrogenase 2 of Saccharomyces cerevisiae (strain ATCC 204508 / S288c) (Baker's yeast).